Here is a 417-residue protein sequence, read N- to C-terminus: NADH-quinone oxidoreductase subunit D 2 (417 aa).

It belongs to the complex I 49 kDa subunit family. In terms of assembly, NDH-1 is composed of 14 different subunits. Subunits NuoB, C, D, E, F, and G constitute the peripheral sector of the complex.

The protein localises to the cell membrane. It catalyses the reaction a quinone + NADH + 5 H(+)(in) = a quinol + NAD(+) + 4 H(+)(out). NDH-1 shuttles electrons from NADH, via FMN and iron-sulfur (Fe-S) centers, to quinones in the respiratory chain. The immediate electron acceptor for the enzyme in this species is believed to be ubiquinone. Couples the redox reaction to proton translocation (for every two electrons transferred, four hydrogen ions are translocated across the cytoplasmic membrane), and thus conserves the redox energy in a proton gradient. The sequence is that of NADH-quinone oxidoreductase subunit D 2 from Roseiflexus sp. (strain RS-1).